We begin with the raw amino-acid sequence, 417 residues long: Gamma-glutamyl phosphate reductase (417 aa).

The protein belongs to the gamma-glutamyl phosphate reductase family.

It is found in the cytoplasm. It catalyses the reaction L-glutamate 5-semialdehyde + phosphate + NADP(+) = L-glutamyl 5-phosphate + NADPH + H(+). It participates in amino-acid biosynthesis; L-proline biosynthesis; L-glutamate 5-semialdehyde from L-glutamate: step 2/2. Its function is as follows. Catalyzes the NADPH-dependent reduction of L-glutamate 5-phosphate into L-glutamate 5-semialdehyde and phosphate. The product spontaneously undergoes cyclization to form 1-pyrroline-5-carboxylate. The chain is Gamma-glutamyl phosphate reductase from Escherichia coli O6:H1 (strain CFT073 / ATCC 700928 / UPEC).